The chain runs to 83 residues: Exodeoxyribonuclease 7 small subunit (83 aa).

The protein belongs to the XseB family. In terms of assembly, heterooligomer composed of large and small subunits.

The protein resides in the cytoplasm. It carries out the reaction Exonucleolytic cleavage in either 5'- to 3'- or 3'- to 5'-direction to yield nucleoside 5'-phosphates.. Its function is as follows. Bidirectionally degrades single-stranded DNA into large acid-insoluble oligonucleotides, which are then degraded further into small acid-soluble oligonucleotides. The sequence is that of Exodeoxyribonuclease 7 small subunit from Bradyrhizobium sp. (strain ORS 278).